We begin with the raw amino-acid sequence, 320 residues long: Lipoyl synthase (320 aa).

A disordered region spans residues Met1–Ile26. The [4Fe-4S] cluster site is built by Cys59, Cys64, Cys70, Cys85, Cys89, Cys92, and Ser298. In terms of domain architecture, Radical SAM core spans Trp71 to Leu287.

The protein belongs to the radical SAM superfamily. Lipoyl synthase family. It depends on [4Fe-4S] cluster as a cofactor.

The protein localises to the cytoplasm. It carries out the reaction [[Fe-S] cluster scaffold protein carrying a second [4Fe-4S](2+) cluster] + N(6)-octanoyl-L-lysyl-[protein] + 2 oxidized [2Fe-2S]-[ferredoxin] + 2 S-adenosyl-L-methionine + 4 H(+) = [[Fe-S] cluster scaffold protein] + N(6)-[(R)-dihydrolipoyl]-L-lysyl-[protein] + 4 Fe(3+) + 2 hydrogen sulfide + 2 5'-deoxyadenosine + 2 L-methionine + 2 reduced [2Fe-2S]-[ferredoxin]. It functions in the pathway protein modification; protein lipoylation via endogenous pathway; protein N(6)-(lipoyl)lysine from octanoyl-[acyl-carrier-protein]: step 2/2. In terms of biological role, catalyzes the radical-mediated insertion of two sulfur atoms into the C-6 and C-8 positions of the octanoyl moiety bound to the lipoyl domains of lipoate-dependent enzymes, thereby converting the octanoylated domains into lipoylated derivatives. This Bartonella quintana (strain Toulouse) (Rochalimaea quintana) protein is Lipoyl synthase.